We begin with the raw amino-acid sequence, 182 residues long: Small ribosomal subunit protein uS4c (182 aa).

A disordered region spans residues 8–36 (LGALPGLTSKRPGSGSDPKNKSRSGKRSQ). The S4 RNA-binding domain occupies 82–143 (MRLDNILFRL…KQRSKALIQN (62 aa)).

This sequence belongs to the universal ribosomal protein uS4 family. As to quaternary structure, part of the 30S ribosomal subunit. Contacts protein S5. The interaction surface between S4 and S5 is involved in control of translational fidelity.

The protein resides in the plastid. Its subcellular location is the chloroplast. Its function is as follows. One of the primary rRNA binding proteins, it binds directly to 16S rRNA where it nucleates assembly of the body of the 30S subunit. With S5 and S12 plays an important role in translational accuracy. The chain is Small ribosomal subunit protein uS4c (rps4) from Dietes robinsoniana (Lord Howe wedding lily).